The sequence spans 211 residues: FMN-dependent NADH:quinone oxidoreductase 3 (211 aa).

Position 102–105 (102–105) interacts with FMN; sequence MWNF.

This sequence belongs to the azoreductase type 1 family. In terms of assembly, homodimer. Requires FMN as cofactor.

It catalyses the reaction 2 a quinone + NADH + H(+) = 2 a 1,4-benzosemiquinone + NAD(+). The catalysed reaction is N,N-dimethyl-1,4-phenylenediamine + anthranilate + 2 NAD(+) = 2-(4-dimethylaminophenyl)diazenylbenzoate + 2 NADH + 2 H(+). In terms of biological role, quinone reductase that provides resistance to thiol-specific stress caused by electrophilic quinones. Functionally, also exhibits azoreductase activity. Catalyzes the reductive cleavage of the azo bond in aromatic azo compounds to the corresponding amines. The sequence is that of FMN-dependent NADH:quinone oxidoreductase 3 from Bacillus anthracis.